The following is a 297-amino-acid chain: Juvenile hormone acid O-methyltransferase (297 aa).

It belongs to the methyltransferase superfamily. In terms of tissue distribution, predominantly expressed in corpora allata. Also expressed at low level in testis.

The catalysed reaction is (2E,6E)-farnesoate + S-adenosyl-L-methionine = methyl (2E,6E)-farnesoate + S-adenosyl-L-homocysteine. It catalyses the reaction juvenile hormone III carboxylate + S-adenosyl-L-methionine = juvenile hormone III + S-adenosyl-L-homocysteine. In terms of biological role, O-methyltransferase that transfers a methyl group from S-adenosyl-L-methionine (SAM) to the carboxyl group of juvenile hormone acids to produce active juvenile hormones in the corpora allata, the last step during juvenile hormone biosynthesis. Also able to methylate farnesoate to methyl farnesoate. The chain is Juvenile hormone acid O-methyltransferase from Drosophila melanogaster (Fruit fly).